Here is a 463-residue protein sequence, read N- to C-terminus: Phosphoglucosamine mutase (463 aa).

Residue S102 is the Phosphoserine intermediate of the active site. 4 residues coordinate Mg(2+): S102, D240, D242, and D244. S102 is modified (phosphoserine).

Belongs to the phosphohexose mutase family. Requires Mg(2+) as cofactor. Post-translationally, activated by phosphorylation.

The catalysed reaction is alpha-D-glucosamine 1-phosphate = D-glucosamine 6-phosphate. Its function is as follows. Catalyzes the conversion of glucosamine-6-phosphate to glucosamine-1-phosphate. The sequence is that of Phosphoglucosamine mutase from Mycobacterium leprae (strain Br4923).